A 328-amino-acid chain; its full sequence is MSGAESYRHITVLLNEAVDALAVREDGVYVDGTFGRGGHSRLILSRLGDAGRLIVFDKDPQAIAVAEELARSDKRVGVVHGGFASFQTALDGLGIGKVDGALFDLGISSPQIDDGSRGFSFRFDAPLDMRMDTTRGMSAAEWIAVASEQDLHEVIKNYGEERFSRQIARAIVAQRAESPIDTTRKLAQIVAQNVRTRERGQDPATRTFQAIRIFINRELEEVGAVLPQVMCRLKEGGRLAVIAFHSLEDRIVKQFVKKYSQHAPLPRWAAVREADLPEPPLKIAGRALKPGEAEIAANPRARSAVLRVAERTAGPIPEQSQRKTSEWQ.

S-adenosyl-L-methionine is bound by residues 37–39 (GGH), Asp57, Phe83, Asp104, and Gln111.

It belongs to the methyltransferase superfamily. RsmH family.

It is found in the cytoplasm. The catalysed reaction is cytidine(1402) in 16S rRNA + S-adenosyl-L-methionine = N(4)-methylcytidine(1402) in 16S rRNA + S-adenosyl-L-homocysteine + H(+). In terms of biological role, specifically methylates the N4 position of cytidine in position 1402 (C1402) of 16S rRNA. This Neisseria meningitidis serogroup A / serotype 4A (strain DSM 15465 / Z2491) protein is Ribosomal RNA small subunit methyltransferase H.